The primary structure comprises 392 residues: Cell division protein FtsZ (392 aa).

Residues 24–28 (GGGCN), 111–113 (GTG), Glu142, Arg145, and Asp189 each bind GTP.

The protein belongs to the FtsZ family. In terms of assembly, homodimer. Polymerizes to form a dynamic ring structure in a strictly GTP-dependent manner. Interacts directly with several other division proteins.

The protein localises to the cytoplasm. Its function is as follows. Essential cell division protein that forms a contractile ring structure (Z ring) at the future cell division site. The regulation of the ring assembly controls the timing and the location of cell division. One of the functions of the FtsZ ring is to recruit other cell division proteins to the septum to produce a new cell wall between the dividing cells. Binds GTP and shows GTPase activity. This chain is Cell division protein FtsZ, found in Neisseria meningitidis serogroup A / serotype 4A (strain DSM 15465 / Z2491).